Consider the following 391-residue polypeptide: MHVFWFIPTHGDSRYLGTSEGARAVHYDYLRQVATAADTLGYEGVLIPTGRSCEDPWVVASALAPVTRRLKFLVAVRPGLHQPALAARMAATFDRLSGGRLLINLVTGGDRTELEGDGVFLDHAQRYAQSEEFIRIWREILSRSHEGGTFDYEGEHLSVKGAKLLYPPVQKPYPPVYFGGSSEAAHDLAAEQVDTYLTWGEPPAAVAQKVADVRARAAQRGRTVRFGIRLHVIVRETDAAAWAAAEELISRVQDETVAQAQAVFSRMDSEGQRRMAALHAGGTRRSRADLEISPNLWAGVGLVRGGAGTALVGDPQTVAARMQEYADLGIDTFVLSGYPHLEEAYRFAELVFPLLPAEVRERIGGGRAAGPLTGPFGEIVGNQYVPRAAQS.

Belongs to the SsuD family.

The catalysed reaction is an alkanesulfonate + FMNH2 + O2 = an aldehyde + FMN + sulfite + H2O + 2 H(+). Its function is as follows. Catalyzes the desulfonation of aliphatic sulfonates. In Paracidovorax citrulli (strain AAC00-1) (Acidovorax citrulli), this protein is Alkanesulfonate monooxygenase.